The primary structure comprises 250 residues: Triosephosphate isomerase (250 aa).

9–11 (NWK) is a binding site for substrate. The active-site Electrophile is the His94. Residue Glu166 is the Proton acceptor of the active site. Substrate-binding positions include Gly172, Ser212, and 233-234 (GG).

Belongs to the triosephosphate isomerase family. As to quaternary structure, homodimer.

The protein resides in the cytoplasm. It carries out the reaction D-glyceraldehyde 3-phosphate = dihydroxyacetone phosphate. Its pathway is carbohydrate biosynthesis; gluconeogenesis. It functions in the pathway carbohydrate degradation; glycolysis; D-glyceraldehyde 3-phosphate from glycerone phosphate: step 1/1. Functionally, involved in the gluconeogenesis. Catalyzes stereospecifically the conversion of dihydroxyacetone phosphate (DHAP) to D-glyceraldehyde-3-phosphate (G3P). In Thermus thermophilus (strain ATCC 27634 / DSM 579 / HB8), this protein is Triosephosphate isomerase.